Consider the following 530-residue polypeptide: GH3 domain-containing protein (530 aa).

Residues 1-17 (MLLWPLLLLLLLLPTLA) form the signal peptide. The tract at residues 99-122 (LTKASQTQQEDSGEQPLPPTSNQD) is disordered. Residue N450 is glycosylated (N-linked (GlcNAc...) asparagine). An N5-methylglutamine modification is found at Q489.

It belongs to the GH3 family. Methylated at Gln-489 by N6AMT1.

Its subcellular location is the endoplasmic reticulum. The protein resides in the nucleus envelope. The sequence is that of GH3 domain-containing protein (GHDC) from Homo sapiens (Human).